The following is an 83-amino-acid chain: Toxin BmKBT (83 aa).

The N-terminal stretch at 1 to 19 (MKAALLLVIFSLMLIGVLT) is a signal peptide. Residues 21–81 (KSGYPTDHEG…TWSRATNKCR (61 aa)) form the LCN-type CS-alpha/beta domain. Cystine bridges form between C31-C80, C35-C54, C41-C61, and C45-C63. Residue K83 is a propeptide, removed by a carboxypeptidase.

This sequence belongs to the long (4 C-C) scorpion toxin superfamily. Sodium channel inhibitor family. Beta subfamily. As to expression, expressed by the venom gland.

Its subcellular location is the secreted. This toxin increases the peak sodium current, slows down the inactivation of sodium channels (Nav), and prolongs the action potential of dorsal root ganglion neurons, which indicates that it behaves as a classical alpha-toxin. It binds to mammal brain and insect sodium channels, but with a different manner. This peptide may bind to a distinct receptor site on mammal brain sodium channels, which is unconnected with that for BmKAS (a beta-toxin), BmKIT2 (a beta-toxin) or BmK I (an alpha toxin). In contrast, the receptor site for BmKabT on insect sodium channels might be closely related to that for the beta-insect depressant toxin BmKIT2. Possesses potent toxicity in mice but induces only paralysis in cotton bollworm. The sequence is that of Toxin BmKBT from Olivierus martensii (Manchurian scorpion).